Here is a 267-residue protein sequence, read N- to C-terminus: Alpha carbonic anhydrase 4 (267 aa).

A signal peptide spans 1–26 (MDTNAKTIFFMAMCFIYLSFPNISHA). N-linked (GlcNAc...) asparagine glycosylation is present at Asn22. The Alpha-carbonic anhydrase domain occupies 34–264 (TPFTYEQKTE…SKGRSVWFYD (231 aa)). Cys59 and Cys214 are joined by a disulfide. His99 acts as the Proton acceptor in catalysis. Zn(2+)-binding residues include His125 and His127. An N-linked (GlcNAc...) asparagine glycan is attached at Asn135. Zn(2+) is bound at residue His144. 210-211 (TV) contributes to the substrate binding site.

It belongs to the alpha-class carbonic anhydrase family. The cofactor is Zn(2+). In terms of processing, N-glycosylated.

The protein localises to the plastid. It localises to the chloroplast stroma. It catalyses the reaction hydrogencarbonate + H(+) = CO2 + H2O. In terms of biological role, reversible hydration of carbon dioxide. The polypeptide is Alpha carbonic anhydrase 4 (ACA4) (Arabidopsis thaliana (Mouse-ear cress)).